The primary structure comprises 423 residues: Endoplasmic reticulum junction formation protein lunapark (423 aa).

Over 1–45 the chain is Cytoplasmic; sequence MGALLAKWRAKPSTVEVLEKMEKDIQSLEEFRDKNQKLRKIWVAR. The stretch at 16–40 forms a coiled coil; the sequence is EVLEKMEKDIQSLEEFRDKNQKLRK. Residues 46 to 66 traverse the membrane as a helical segment; sequence LFFYSTILYILTSLTVYLWYL. The Lumenal segment spans residues 67–77; sequence PDGMTARLLTM. The helical transmembrane segment at 78–98 threads the bilayer; it reads LLFLSFPVLIWFVRTLLILWF. Residues 99–423 lie on the Cytoplasmic side of the membrane; the sequence is SRRTERNNDA…ETEESFMETE (325 aa). Positions 101-128 form a coiled coil; it reads RTERNNDALELLKTEKKKILEEVMEKET. The disordered stretch occupies residues 147 to 169; that stretch reads KELELPVPGPPITPRPGQDLRQR. Thr-159 carries the phosphothreonine modification. Residues Ser-177, Ser-179, and Ser-188 each carry the phosphoserine modification. At Thr-198 the chain carries Phosphothreonine. The interval 200–247 is disordered; it reads SLQRDTSAPGGPPERSVQPTPQSNILQRRPGSPATTVSGMAIHPPGPP. Phosphoserine is present on residues Ser-206 and Ser-215. Polar residues predominate over residues 216–225; it reads VQPTPQSNIL. A Phosphothreonine modification is found at Thr-219. 2 positions are modified to phosphoserine: Ser-222 and Ser-231. The C4-type; plays a role in ER morphology zinc finger occupies 280–305; it reads CQQCFSHNGMALKEEFEYVAFRCAYC. The tract at residues 318–423 is disordered; that stretch reads APRLQEINFD…ETEESFMETE (106 aa). The span at 334–343 shows a compositional bias: polar residues; the sequence is DSQGSVSSVQ. Acidic residues-rich tracts occupy residues 370–391 and 414–423; these read QAIE…DDSE and ETEESFMETE.

It belongs to the lunapark family. In terms of assembly, homodimer; homodimerization requires the C4-type zinc finger motif and decreases during mitosis in a phosphorylation-dependent manner. Post-translationally, phosphorylated. Phosphorylation at Thr-159 occurs during interphase. Phosphorylation at Ser-177, Ser-179, Ser-188, Thr-198, Ser-206, Ser-215, Thr-219, Ser-222 and Ser-231 occurs during mitosis; these phosphorylations reduce both its homodimerization and the ER three-way tubular junction formation.

The protein localises to the endoplasmic reticulum membrane. Its function is as follows. Endoplasmic reticulum (ER)-shaping membrane protein that plays a role in determining ER morphology. Involved in the stabilization of nascent three-way ER tubular junctions within the ER network. May also play a role as a curvature-stabilizing protein within three-way ER tubular junction network. The protein is Endoplasmic reticulum junction formation protein lunapark (lnpk) of Xenopus tropicalis (Western clawed frog).